We begin with the raw amino-acid sequence, 949 residues long: Piwi-like protein 2 (949 aa).

Residues 1 to 125 (MDPTRPPFRG…SLSTRVQQAS (125 aa)) are disordered. Positions 115 to 125 (PSLSTRVQQAS) are enriched in polar residues. The 113-residue stretch at 366 to 478 (SVLDIMNILY…LLPELAFMTG (113 aa)) folds into the PAZ domain. A Piwi domain is found at 644–935 (LLVCLISGTR…LAFLSGQFLH (292 aa)). Active-site residues include Asp-721, Glu-759, Asp-791, and His-924.

The protein belongs to the argonaute family. Piwi subfamily. Component of the PET complex. Mg(2+) is required as a cofactor. In terms of processing, methylated on arginine residues; required for the interaction with Tudor domain-containing protein and subsequent localization to the meiotic nuage, also named P granule. Expressed in oocytes, testis and liver (at protein level).

It localises to the cytoplasm. The protein localises to the nucleus. In terms of biological role, endoribonuclease that plays a central role during spermatogenesis by repressing transposable elements and preventing their mobilization, which is essential for the germline integrity. Plays an essential role in meiotic differentiation of spermatocytes, germ cell differentiation and in self-renewal of spermatogonial stem cells. Acts via the piRNA metabolic process, which mediates the repression of transposable elements during meiosis by forming complexes composed of piRNAs and Piwi proteins and govern the methylation and subsequent repression of transposons. During piRNA biosynthesis, plays a key role in the piRNA amplification loop, also named ping-pong amplification cycle, by acting as a 'slicer-competent' piRNA endoribonuclease that cleaves primary piRNAs, which are then loaded onto 'slicer-incompetent' piwil4. Piwil2 slicing produces a pre-miRNA intermediate, which is then processed in mature piRNAs, and as well as a 16 nucleotide by-product that is degraded. Required for piwil4/miwi2 nuclear localization and association with secondary piRNAs antisense. Represses circadian rhythms by promoting the stability and activity of core clock components BMAL1 and CLOCK. The protein is Piwi-like protein 2 (piwil2) of Xenopus tropicalis (Western clawed frog).